The following is a 138-amino-acid chain: Cytosolic calcium-binding protein 2 (138 aa).

Positions 31-41 (TEVTQQPEESV) are enriched in low complexity. The tract at residues 31–122 (TEVTQQPEES…KKTEVVEEKQ (92 aa)) is disordered. 6 tandem repeats follow at residues 62 to 68 (VEEAEKK), 71 to 75 (ETEKK), 92 to 98 (VEEEEKK), 109 to 114 (VEEEKK), 118 to 122 (VEEKQ), and 131 to 135 (VAVEK). The 6 X 5 AA approximate repeats of V-E-E-K-K stretch occupies residues 62 to 135 (VEEAEKKDEE…AAAEEVAVEK (74 aa)). A compositionally biased stretch (basic and acidic residues) spans 64–85 (EAEKKDEETEKKTEEKDEKTEV). Residues 110-122 (EEEKKTEVVEEKQ) are compositionally biased toward basic and acidic residues.

In terms of tissue distribution, predominantly expressed in roots (e.g. in endodermis in the stele) and stems, to a lower extent in shoots, flowers and siliques, and, at low levels, in leaves.

The protein localises to the cytoplasm. It localises to the cytosol. Binds calcium Ca(2+) and may act as a signal mediator to buffer Ca(2+). This chain is Cytosolic calcium-binding protein 2, found in Arabidopsis thaliana (Mouse-ear cress).